The sequence spans 339 residues: Protein-glutamate methylesterase/protein-glutamine glutaminase (339 aa).

The Response regulatory domain occupies 2-119 (RIGVVNDMPM…EGNASSQSAR (118 aa)). Position 53 is a 4-aspartylphosphate (D53). One can recognise a CheB-type methylesterase domain in the interval 149-338 (PTPRRLIAIG…SRIIEACERS (190 aa)). Residues S160, H187, and D280 contribute to the active site.

Belongs to the CheB family. Phosphorylated by CheA. Phosphorylation of the N-terminal regulatory domain activates the methylesterase activity.

The protein resides in the cytoplasm. The enzyme catalyses [protein]-L-glutamate 5-O-methyl ester + H2O = L-glutamyl-[protein] + methanol + H(+). It catalyses the reaction L-glutaminyl-[protein] + H2O = L-glutamyl-[protein] + NH4(+). Its function is as follows. Involved in chemotaxis. Part of a chemotaxis signal transduction system that modulates chemotaxis in response to various stimuli. Catalyzes the demethylation of specific methylglutamate residues introduced into the chemoreceptors (methyl-accepting chemotaxis proteins or MCP) by CheR. Also mediates the irreversible deamidation of specific glutamine residues to glutamic acid. The polypeptide is Protein-glutamate methylesterase/protein-glutamine glutaminase (Mesorhizobium japonicum (strain LMG 29417 / CECT 9101 / MAFF 303099) (Mesorhizobium loti (strain MAFF 303099))).